Here is a 149-residue protein sequence, read N- to C-terminus: D-aminoacyl-tRNA deacylase (149 aa).

A Gly-cisPro motif, important for rejection of L-amino acids motif is present at residues 137-138 (GP).

The protein belongs to the DTD family. In terms of assembly, homodimer.

Its subcellular location is the cytoplasm. The catalysed reaction is glycyl-tRNA(Ala) + H2O = tRNA(Ala) + glycine + H(+). It carries out the reaction a D-aminoacyl-tRNA + H2O = a tRNA + a D-alpha-amino acid + H(+). In terms of biological role, an aminoacyl-tRNA editing enzyme that deacylates mischarged D-aminoacyl-tRNAs. Also deacylates mischarged glycyl-tRNA(Ala), protecting cells against glycine mischarging by AlaRS. Acts via tRNA-based rather than protein-based catalysis; rejects L-amino acids rather than detecting D-amino acids in the active site. By recycling D-aminoacyl-tRNA to D-amino acids and free tRNA molecules, this enzyme counteracts the toxicity associated with the formation of D-aminoacyl-tRNA entities in vivo and helps enforce protein L-homochirality. The sequence is that of D-aminoacyl-tRNA deacylase from Clostridium botulinum (strain Kyoto / Type A2).